A 342-amino-acid chain; its full sequence is Isopentenyl-diphosphate delta-isomerase (342 aa).

12–13 serves as a coordination point for substrate; that stretch reads RK. FMN-binding positions include 71 to 73, Ser101, and Asn129; that span reads AMT. Residue 101–103 participates in substrate binding; sequence SQR. Substrate is bound at residue Gln163. Glu164 lines the Mg(2+) pocket. FMN contacts are provided by residues Lys195, Thr225, 272-274, and 293-294; these read GIR and AR.

This sequence belongs to the IPP isomerase type 2 family. In terms of assembly, homooctamer. Dimer of tetramers. The cofactor is FMN. NADPH is required as a cofactor. Requires Mg(2+) as cofactor.

The protein resides in the cytoplasm. It catalyses the reaction isopentenyl diphosphate = dimethylallyl diphosphate. In terms of biological role, involved in the biosynthesis of isoprenoids. Catalyzes the 1,3-allylic rearrangement of the homoallylic substrate isopentenyl (IPP) to its allylic isomer, dimethylallyl diphosphate (DMAPP). This Mycolicibacterium vanbaalenii (strain DSM 7251 / JCM 13017 / BCRC 16820 / KCTC 9966 / NRRL B-24157 / PYR-1) (Mycobacterium vanbaalenii) protein is Isopentenyl-diphosphate delta-isomerase.